Reading from the N-terminus, the 219-residue chain is 2-hydroxy-3-keto-5-methylthiopentenyl-1-phosphate phosphatase (219 aa).

Belongs to the HAD-like hydrolase superfamily. MtnX family.

It carries out the reaction 2-hydroxy-5-methylsulfanyl-3-oxopent-1-enyl phosphate + H2O = 1,2-dihydroxy-5-(methylsulfanyl)pent-1-en-3-one + phosphate. The protein operates within amino-acid biosynthesis; L-methionine biosynthesis via salvage pathway; L-methionine from S-methyl-5-thio-alpha-D-ribose 1-phosphate: step 4/6. Functionally, dephosphorylates 2-hydroxy-3-keto-5-methylthiopentenyl-1-phosphate (HK-MTPenyl-1-P) yielding 1,2-dihydroxy-3-keto-5-methylthiopentene (DHK-MTPene). This Bacillus cereus (strain G9842) protein is 2-hydroxy-3-keto-5-methylthiopentenyl-1-phosphate phosphatase.